Consider the following 387-residue polypeptide: uncharacterized protein (387 aa).

This is an uncharacterized protein from Escherichia coli (strain K12).